The chain runs to 479 residues: tRNA modification GTPase MnmE (479 aa).

Arg25, Glu82, and Lys134 together coordinate (6S)-5-formyl-5,6,7,8-tetrahydrofolate. A TrmE-type G domain is found at 230 to 401 (GLRVVIAGQP…LRAALLARAG (172 aa)). Asn240 serves as a coordination point for K(+). Residues 240-245 (NAGKSS), 259-265 (TPIPGTT), 284-287 (DTAG), 352-355 (NKAD), and 382-384 (SAR) contribute to the GTP site. Ser244 provides a ligand contact to Mg(2+). K(+) contacts are provided by Thr259, Ile261, and Thr264. Residue Thr265 coordinates Mg(2+). Residue Lys479 coordinates (6S)-5-formyl-5,6,7,8-tetrahydrofolate.

It belongs to the TRAFAC class TrmE-Era-EngA-EngB-Septin-like GTPase superfamily. TrmE GTPase family. Homodimer. Heterotetramer of two MnmE and two MnmG subunits. K(+) serves as cofactor.

The protein localises to the cytoplasm. Its function is as follows. Exhibits a very high intrinsic GTPase hydrolysis rate. Involved in the addition of a carboxymethylaminomethyl (cmnm) group at the wobble position (U34) of certain tRNAs, forming tRNA-cmnm(5)s(2)U34. This Leptothrix cholodnii (strain ATCC 51168 / LMG 8142 / SP-6) (Leptothrix discophora (strain SP-6)) protein is tRNA modification GTPase MnmE.